The following is a 430-amino-acid chain: UDP-N-acetylglucosamine 1-carboxyvinyltransferase 1 (430 aa).

Position 22–23 (22–23 (KN)) interacts with phosphoenolpyruvate. Arg102 contributes to the UDP-N-acetyl-alpha-D-glucosamine binding site. The active-site Proton donor is Cys126. The residue at position 126 (Cys126) is a 2-(S-cysteinyl)pyruvic acid O-phosphothioketal. UDP-N-acetyl-alpha-D-glucosamine-binding positions include 131–135 (RPVDL), 172–175 (KVSV), Asp317, and Ile339.

This sequence belongs to the EPSP synthase family. MurA subfamily.

It is found in the cytoplasm. The catalysed reaction is phosphoenolpyruvate + UDP-N-acetyl-alpha-D-glucosamine = UDP-N-acetyl-3-O-(1-carboxyvinyl)-alpha-D-glucosamine + phosphate. It participates in cell wall biogenesis; peptidoglycan biosynthesis. In terms of biological role, cell wall formation. Adds enolpyruvyl to UDP-N-acetylglucosamine. This Mesorhizobium japonicum (strain LMG 29417 / CECT 9101 / MAFF 303099) (Mesorhizobium loti (strain MAFF 303099)) protein is UDP-N-acetylglucosamine 1-carboxyvinyltransferase 1.